The following is a 504-amino-acid chain: Probable cytosol aminopeptidase (504 aa).

Residues Lys-274 and Asp-279 each coordinate Mn(2+). Lys-286 is an active-site residue. Positions 297, 356, and 358 each coordinate Mn(2+). Arg-360 is a catalytic residue.

The protein belongs to the peptidase M17 family. It depends on Mn(2+) as a cofactor.

The protein resides in the cytoplasm. It carries out the reaction Release of an N-terminal amino acid, Xaa-|-Yaa-, in which Xaa is preferably Leu, but may be other amino acids including Pro although not Arg or Lys, and Yaa may be Pro. Amino acid amides and methyl esters are also readily hydrolyzed, but rates on arylamides are exceedingly low.. The catalysed reaction is Release of an N-terminal amino acid, preferentially leucine, but not glutamic or aspartic acids.. Functionally, presumably involved in the processing and regular turnover of intracellular proteins. Catalyzes the removal of unsubstituted N-terminal amino acids from various peptides. In Blochmanniella floridana, this protein is Probable cytosol aminopeptidase.